The sequence spans 57 residues: DNA-directed RNA polymerase subunit Rpo6 (57 aa).

It belongs to the archaeal Rpo6/eukaryotic RPB6 RNA polymerase subunit family. As to quaternary structure, part of the RNA polymerase complex.

It localises to the cytoplasm. The protein localises to the chromosome. The enzyme catalyses RNA(n) + a ribonucleoside 5'-triphosphate = RNA(n+1) + diphosphate. Its function is as follows. DNA-dependent RNA polymerase (RNAP) catalyzes the transcription of DNA into RNA using the four ribonucleoside triphosphates as substrates. The polypeptide is DNA-directed RNA polymerase subunit Rpo6 (Thermococcus kodakarensis (strain ATCC BAA-918 / JCM 12380 / KOD1) (Pyrococcus kodakaraensis (strain KOD1))).